Reading from the N-terminus, the 243-residue chain is Small ribosomal subunit protein uS3 (243 aa).

In terms of domain architecture, KH type-2 spans 38 to 106; sequence IRKYLNARLA…DIQINIFEVK (69 aa). The interval 214–243 is disordered; the sequence is PNFTQSKESGRGNNGGNNGGKNFKRKKNNR.

The protein belongs to the universal ribosomal protein uS3 family. In terms of assembly, part of the 30S ribosomal subunit. Forms a tight complex with proteins S10 and S14.

Binds the lower part of the 30S subunit head. Binds mRNA in the 70S ribosome, positioning it for translation. The polypeptide is Small ribosomal subunit protein uS3 (Bacteroides thetaiotaomicron (strain ATCC 29148 / DSM 2079 / JCM 5827 / CCUG 10774 / NCTC 10582 / VPI-5482 / E50)).